The chain runs to 554 residues: Exodeoxyribonuclease 7 large subunit (554 aa).

It belongs to the XseA family. Heterooligomer composed of large and small subunits.

It localises to the cytoplasm. The catalysed reaction is Exonucleolytic cleavage in either 5'- to 3'- or 3'- to 5'-direction to yield nucleoside 5'-phosphates.. Functionally, bidirectionally degrades single-stranded DNA into large acid-insoluble oligonucleotides, which are then degraded further into small acid-soluble oligonucleotides. This is Exodeoxyribonuclease 7 large subunit from Chlamydia pneumoniae (Chlamydophila pneumoniae).